Reading from the N-terminus, the 128-residue chain is Glycine cleavage system H protein (128 aa).

The region spanning 24–106 is the Lipoyl-binding domain; the sequence is VFCVGITDHA…YDEGWLFRIR (83 aa). At K65 the chain carries N6-lipoyllysine.

It belongs to the GcvH family. In terms of assembly, the glycine cleavage system is composed of four proteins: P, T, L and H. (R)-lipoate is required as a cofactor.

Its function is as follows. The glycine cleavage system catalyzes the degradation of glycine. The H protein shuttles the methylamine group of glycine from the P protein to the T protein. This is Glycine cleavage system H protein from Edwardsiella ictaluri (strain 93-146).